The following is a 335-amino-acid chain: Biotin synthase (335 aa).

The Radical SAM core domain maps to 41-269 (KQIQVCKLIS…TSDVRLSAGR (229 aa)). [4Fe-4S] cluster-binding residues include cysteine 56, cysteine 60, and cysteine 63. Residues cysteine 100, cysteine 132, cysteine 192, and arginine 264 each contribute to the [2Fe-2S] cluster site.

The protein belongs to the radical SAM superfamily. Biotin synthase family. As to quaternary structure, homodimer. The cofactor is [4Fe-4S] cluster. It depends on [2Fe-2S] cluster as a cofactor.

It catalyses the reaction (4R,5S)-dethiobiotin + (sulfur carrier)-SH + 2 reduced [2Fe-2S]-[ferredoxin] + 2 S-adenosyl-L-methionine = (sulfur carrier)-H + biotin + 2 5'-deoxyadenosine + 2 L-methionine + 2 oxidized [2Fe-2S]-[ferredoxin]. It functions in the pathway cofactor biosynthesis; biotin biosynthesis; biotin from 7,8-diaminononanoate: step 2/2. Functionally, catalyzes the conversion of dethiobiotin (DTB) to biotin by the insertion of a sulfur atom into dethiobiotin via a radical-based mechanism. This is Biotin synthase from Nostoc sp. (strain PCC 7120 / SAG 25.82 / UTEX 2576).